A 240-amino-acid chain; its full sequence is Sorting nexin-3 (240 aa).

Residues 1-85 are disordered; sequence MSAYPQDTYF…PPVQVTHSPF (85 aa). A compositionally biased stretch (pro residues) spans 22-33; the sequence is YQPPPQPQPQQP. Low complexity-rich tracts occupy residues 34–54 and 62–84; these read PYQQ…QPYQ and QQSP…THSP. In terms of domain architecture, PX spans 118–235; sequence SFLEIEIRNP…CAFLQDPAWD (118 aa). Residues arginine 161, serine 163, lysine 187, arginine 192, and arginine 201 each contribute to the a 1,2-diacyl-sn-glycero-3-phospho-(1D-myo-inositol-3-phosphate) site.

It belongs to the sorting nexin family.

It is found in the cytoplasm. Its subcellular location is the golgi apparatus membrane. The protein localises to the prevacuolar compartment membrane. Functionally, required for retention of late Golgi membrane proteins. Component of the retrieval machinery that functions by direct interaction with the cytosolic tails of certain TGN membrane proteins during the sorting/budding process at the prevacuolar compartment. Binds phosphatidylinositol 3-phosphate (PtdIns(P3)). This Cryptococcus neoformans var. neoformans serotype D (strain JEC21 / ATCC MYA-565) (Filobasidiella neoformans) protein is Sorting nexin-3 (SNX3).